Reading from the N-terminus, the 137-residue chain is Small ribosomal subunit protein uS12 (137 aa).

The disordered stretch occupies residues 1–57 (MPTINQLVRKPRKSKTKQSDSPVLNRGFNSKKKQFTNLNSPQKRGVCTRVGTMTPRK). D102 bears the 3-methylthioaspartic acid mark. The tract at residues 118–137 (SGVDGRRQGRSLYGTKKPKN) is disordered.

This sequence belongs to the universal ribosomal protein uS12 family. In terms of assembly, part of the 30S ribosomal subunit. Contacts proteins S8 and S17. May interact with IF1 in the 30S initiation complex.

In terms of biological role, with S4 and S5 plays an important role in translational accuracy. Interacts with and stabilizes bases of the 16S rRNA that are involved in tRNA selection in the A site and with the mRNA backbone. Located at the interface of the 30S and 50S subunits, it traverses the body of the 30S subunit contacting proteins on the other side and probably holding the rRNA structure together. The combined cluster of proteins S8, S12 and S17 appears to hold together the shoulder and platform of the 30S subunit. The protein is Small ribosomal subunit protein uS12 of Staphylococcus epidermidis (strain ATCC 12228 / FDA PCI 1200).